The primary structure comprises 639 residues: Testicular spindle-associated protein SHCBP1L (639 aa).

Disordered regions lie at residues 1–25 and 48–75; these read MESDATTSEPKASVGSDSSPAEQTV and VASPRPVKGKAARRRLQLPPVTQAETCD. S3 is subject to O-acetylserine. Phosphoserine is present on residues S8, S19, and S50. Residues 54 to 63 are compositionally biased toward basic residues; it reads VKGKAARRRL. Residues 285 to 312 adopt a coiled-coil conformation; it reads IAQRFKKTLEKYKNKRVELIEYQSNIKE. 4 PbH1 repeats span residues 479–500, 501–523, 524–557, and 560–582; these read SGHLTLENCLLKCEGTGVCVLT, GASLTITNSEITGAQGAGVELYP, GSIAILEGNEIHHCNNLRTSDSSKSTLGGVNMKV, and APKLKMTNNHIYNNNGYGVSILQ. The residue at position 556 (K556) is an N6-acetyllysine. K631 is modified (N6-acetyllysine).

Interacts with HSPA2; this interaction may promote the recruitment of HSPA2 to the spindle. As to expression, expressed in pachytene spermatocytes and elongating spermatids inside the seminiferous tubules. Not detected in ovary (at protein level). Testis-specific.

It localises to the cytoplasm. Its subcellular location is the cytoskeleton. The protein resides in the spindle. Functionally, testis-specific spindle-associated factor that plays a role in spermatogenesis. In association with HSPA2, participates in the maintenance of spindle integrity during meiosis in male germ cells. This chain is Testicular spindle-associated protein SHCBP1L, found in Mus musculus (Mouse).